The primary structure comprises 212 residues: uncharacterized protein (212 aa).

Residues 29 to 146 (KGKAGEKLVK…AAFHPKCSLK (118 aa)) form the NERD domain.

This is an uncharacterized protein from Bacillus anthracis.